The following is a 250-amino-acid chain: 5'-nucleotidase SurE (250 aa).

Positions 8, 9, 39, and 91 each coordinate a divalent metal cation.

The protein belongs to the SurE nucleotidase family. Requires a divalent metal cation as cofactor.

Its subcellular location is the cytoplasm. The enzyme catalyses a ribonucleoside 5'-phosphate + H2O = a ribonucleoside + phosphate. In terms of biological role, nucleotidase that shows phosphatase activity on nucleoside 5'-monophosphates. This chain is 5'-nucleotidase SurE, found in Syntrophotalea carbinolica (strain DSM 2380 / NBRC 103641 / GraBd1) (Pelobacter carbinolicus).